The following is a 1108-amino-acid chain: Mediator of RNA polymerase II transcription subunit 14 (1108 aa).

Disordered stretches follow at residues Met1 to Thr30, Ser35 to Leu54, and Gln1048 to Thr1108. Polar residues predominate over residues Ser35–Asn52. Over residues Gln1048–Leu1080 the composition is skewed to low complexity.

Belongs to the Mediator complex subunit 14 family. In terms of assembly, component of the Mediator complex.

The protein localises to the nucleus. Functionally, component of the Mediator complex, a coactivator involved in the regulated transcription of nearly all RNA polymerase II-dependent genes. Mediator functions as a bridge to convey information from gene-specific regulatory proteins to the basal RNA polymerase II transcription machinery. Mediator is recruited to promoters by direct interactions with regulatory proteins and serves as a scaffold for the assembly of a functional preinitiation complex with RNA polymerase II and the general transcription factors. This is Mediator of RNA polymerase II transcription subunit 14 (RGR1) from Pyricularia oryzae (strain 70-15 / ATCC MYA-4617 / FGSC 8958) (Rice blast fungus).